The primary structure comprises 747 residues: MFGGPGPGVLGAQGMAGPLRGRVEELKLPWWRESSPLVLRHSEAARLAADALLERGEAAYLRVISEERELPFLSALDVDYMTSHVRGGPELSEAQGQEASGPDRLSLLSEVTSGTYFPMASDIDPPDLDLGWPEVPQATGFSPTQAVVHFQRDKAKNIKDLLRFLFSQAHTVVAVVMDIFTDMELLCDLMEASSRRGVPVYLLLAQEHLRHFLEMCYKMDLNGEHLPNMRVRSTCGDTYCSKAGRRFTGQALEKFVLIDCEQVVAGSYSFTWLCSQAHTSMVLQLRGRIVEDFDREFRCLYAESQPVEGFCGGEDPLSPRALRPPPVALAFRPDVPSPTSSLPSSTSLSSIKQSPLMGRSSYLALPGGGDCSDTGVVSSSLGPARREASGQPSLHRQLSDPNHGSPPGLYRANLGKLGAYPWSQSSPALNHNSTSPLTLAVGSPLLPRSRPLLQFHRGAPALSRFPENGLPGSQEPSPLRGRWVPGTTLETVEEKEKKASPSQSRGQLDLLVPFPRAREVGDPDSGVTPNSGPLRPGEQAPEDRRLSPSQADSQLDLLSRALGTGGAPELGSLRPGDRALEDRRLSLNQSRGQSDLLMQYPKAQGSRVPLETNSSARPARRAPDERRQTLGHSQLDLITKFGPFRGEGPGPNGLPISSPARTAGAGSGDEKRLTLGHSKLDLITKYHQLHGARQGTEPGGPKGGHLNGGNSDLVRDEKRLTLGHSKLDLITKYNKSKFKQLRSRFES.

Positions 1 to 309 are DUF1669; sequence MFGGPGPGVL…LYAESQPVEG (309 aa). 7 disordered regions span residues 322–352, 374–412, 462–484, 517–550, 588–633, 646–672, and 692–715; these read LRPP…SSIK, TGVV…LYRA, LSRF…GRWV, AREV…SPSQ, NQSR…LGHS, GEGP…DEKR, and ARQG…DLVR. Residues 328-350 show a composition bias toward low complexity; that stretch reads ALAFRPDVPSPTSSLPSSTSLSS. The span at 390–402 shows a compositional bias: polar residues; that stretch reads GQPSLHRQLSDPN. The span at 697-707 shows a compositional bias: gly residues; that stretch reads EPGGPKGGHLN.

Belongs to the FAM83 family. May interact with RAF1. In terms of processing, phosphorylated in vitro by CSNK1A1.

It localises to the cytoplasm. In terms of biological role, may play a role in MAPK signaling. The polypeptide is Protein FAM83C (Homo sapiens (Human)).